Reading from the N-terminus, the 396-residue chain is Acetate kinase (396 aa).

Residue Asn8 participates in Mg(2+) binding. Lys15 is a binding site for ATP. Position 89 (Arg89) interacts with substrate. Asp146 serves as the catalytic Proton donor/acceptor. ATP is bound by residues 206–210, 280–282, and 328–332; these read HLGNG, DMR, and GVGEN. Glu382 is a Mg(2+) binding site.

It belongs to the acetokinase family. In terms of assembly, homodimer. The cofactor is Mg(2+). Mn(2+) serves as cofactor.

It localises to the cytoplasm. It catalyses the reaction acetate + ATP = acetyl phosphate + ADP. Its pathway is metabolic intermediate biosynthesis; acetyl-CoA biosynthesis; acetyl-CoA from acetate: step 1/2. Catalyzes the formation of acetyl phosphate from acetate and ATP. Can also catalyze the reverse reaction. In Clavibacter michiganensis subsp. michiganensis (strain NCPPB 382), this protein is Acetate kinase.